The sequence spans 554 residues: Probable pectinesterase/pectinesterase inhibitor 6 (554 aa).

The signal sequence occupies residues 1–32 (MDHKILLTPPKSLYTKCIITIIYVVSISHLNA). A pectinesterase inhibitor 6 region spans residues 29–183 (HLNAHFITSC…TKSISNSLAV (155 aa)). N119 and N172 each carry an N-linked (GlcNAc...) asparagine glycan. The pectinesterase 6 stretch occupies residues 250-540 (DLVVAKDGSG…FTVENFLDGN (291 aa)). Substrate-binding residues include T327 and Q357. D380 functions as the Proton donor; for pectinesterase activity in the catalytic mechanism. The cysteines at positions 394 and 414 are disulfide-linked. The active-site Nucleophile; for pectinesterase activity is D401. R460 and W462 together coordinate substrate.

This sequence in the N-terminal section; belongs to the PMEI family. In the C-terminal section; belongs to the pectinesterase family. Expressed in rosette leaves, flower and siliques.

The protein localises to the secreted. Its subcellular location is the cell wall. It carries out the reaction [(1-&gt;4)-alpha-D-galacturonosyl methyl ester](n) + n H2O = [(1-&gt;4)-alpha-D-galacturonosyl](n) + n methanol + n H(+). It functions in the pathway glycan metabolism; pectin degradation; 2-dehydro-3-deoxy-D-gluconate from pectin: step 1/5. In terms of biological role, acts in the modification of cell walls via demethylesterification of cell wall pectin. In Arabidopsis thaliana (Mouse-ear cress), this protein is Probable pectinesterase/pectinesterase inhibitor 6 (PME6).